The sequence spans 177 residues: FANCD2 opposite strand protein (177 aa).

In Homo sapiens (Human), this protein is FANCD2 opposite strand protein (FANCD2OS).